The following is a 416-amino-acid chain: PRKCA-binding protein (416 aa).

The PDZ domain maps to 22 to 105 (KVTLQKDAQN…EVTIHYNKLQ (84 aa)). The Zn(2+) site is built by cysteine 44 and cysteine 46. Threonine 82 is modified (phosphothreonine). The AH domain occupies 144–357 (LCNDGLVKRL…CYAVLRDADV (214 aa)). The disordered stretch occupies residues 373-416 (PNQGGFTDGEDEEEEEEDGAAREVSKDARGATGPTDKGGSWCDS). The span at 380–390 (DGEDEEEEEED) shows a compositional bias: acidic residues. A compositionally biased stretch (basic and acidic residues) spans 391 to 401 (GAAREVSKDAR). Cysteine 414 carries the S-palmitoyl cysteine; by DHHC8 lipid modification.

Monomer and homodimer. Interacts with CXADR. Interacts presynaptically with the glutamate receptors GRIA2, GRIA3, GRIK3, isoform 3 of GRIA4, isoform A of GRM4, GRM7 and GRM8; with NAPA and NAPB; and with BTG2. The interaction with NAPA and NAPB disrupts the interaction with GRIA2, conducting to the internalization of GRIA2. Interacts with PRKCA; with the amine transporters SLC6A2 and SLC6A3; with the channels ASIC1 and ASIC2; with the GTP-binding proteins ARF1 and ARF3; with the ephrin receptor tyrosine kinases EPHA7, EPHB1 and EPHB2; with ERBB2 and through its PDZ domain with the C-terminal tail of PRLHR. Interacts with UNC5A. Interacts (via AH domain) with NCS1/FREQ; in a calcium-dependent manner. Interacts with F-actin and associates with the ARP2/3 complex. Interacts (via PDZ domain) with ARF1 (activated); the interaction blocks Arp2/3 complex inhibition. Interacts with SORCS3. Post-translationally, phosphorylation at Thr-82 appears to inhibit the interaction with AMPA receptors. Palmitoylation on Cys-414 is essential for long-term synaptic depression (LTD). Ubiquitous.

The protein resides in the cytoplasm. The protein localises to the perinuclear region. It is found in the membrane. Its subcellular location is the postsynaptic density. It localises to the synapse. The protein resides in the synaptosome. The protein localises to the cytoskeleton. Functionally, probable adapter protein that bind to and organize the subcellular localization of a variety of membrane proteins containing some PDZ recognition sequence. Involved in the clustering of various receptors, possibly by acting at the receptor internalization level. Plays a role in synaptic plasticity by regulating the trafficking and internalization of AMPA receptors. May be regulated upon PRKCA activation. May regulate ASIC1/ASIC3 channel. Regulates actin polymerization by inhibiting the actin-nucleating activity of the Arp2/3 complex; the function is competitive with nucleation promoting factors and is linked to neuronal morphology regulation and AMPA receptor (AMPAR) endocytosis. Via interaction with the Arp2/3 complex involved in regulation of synaptic plasicity of excitatory synapses and required for spine shrinkage during long-term depression (LTD). Involved in regulation of astrocyte morphology, antagonistic to Arp2/3 complex activator WASL/N-WASP function. The chain is PRKCA-binding protein (Pick1) from Rattus norvegicus (Rat).